Reading from the N-terminus, the 111-residue chain is Ribosome-binding factor A (111 aa).

It belongs to the RbfA family. As to quaternary structure, monomer. Binds 30S ribosomal subunits, but not 50S ribosomal subunits or 70S ribosomes.

It is found in the cytoplasm. One of several proteins that assist in the late maturation steps of the functional core of the 30S ribosomal subunit. Associates with free 30S ribosomal subunits (but not with 30S subunits that are part of 70S ribosomes or polysomes). Required for efficient processing of 16S rRNA. May interact with the 5'-terminal helix region of 16S rRNA. The chain is Ribosome-binding factor A from Helicobacter pylori (strain HPAG1).